Consider the following 325-residue polypeptide: MIEVQQLCKVYGEGQPAALDRVSLTVPDRAVYGILGRSGAGKSTLLRCLNLLERPSSGRILMDGQDLGALSASELRRQRQGIGMIFQGFNLLHSRTVEDNVAVPLEIAGLGKSQRRARVLELLELVGLGDKAQAYPSQLSGGQKQRVGIARALAAGPRYLLSDEATSALDPETTASILQLLAQINRELGLTIVLITHELEVVKAICSHAASLAGGRLMESGAVAELLGNPQSALGRALLPGYNLPFNGSQPQAELTFFDNQRAAPLLEQLSRQQALELKVLAGGVEAVGGRRVGRLRIAAAPADAGKFQQLLTALAQRGIRSERL.

Residues 2 to 239 enclose the ABC transporter domain; sequence IEVQQLCKVY…PQSALGRALL (238 aa). Position 36-43 (36-43) interacts with ATP; sequence GRSGAGKS.

Belongs to the ABC transporter superfamily. Methionine importer (TC 3.A.1.24) family. The complex is composed of two ATP-binding proteins (MetN), two transmembrane proteins (MetI) and a solute-binding protein (MetQ).

Its subcellular location is the cell inner membrane. It catalyses the reaction L-methionine(out) + ATP + H2O = L-methionine(in) + ADP + phosphate + H(+). It carries out the reaction D-methionine(out) + ATP + H2O = D-methionine(in) + ADP + phosphate + H(+). In terms of biological role, part of the ABC transporter complex MetNIQ involved in methionine import. Responsible for energy coupling to the transport system. This Pseudomonas fluorescens (strain ATCC BAA-477 / NRRL B-23932 / Pf-5) protein is Methionine import ATP-binding protein MetN 3.